A 125-amino-acid chain; its full sequence is SOSS complex subunit C homolog (125 aa).

The disordered stretch occupies residues 43-77 (MPSPQLLGQPTVAPEFLPQGVGLPTNATPPRSAFN). The segment covering 67 to 77 (TNATPPRSAFN) has biased composition (polar residues).

This sequence belongs to the SOSS-C family.

The polypeptide is SOSS complex subunit C homolog (Drosophila persimilis (Fruit fly)).